A 37-amino-acid polypeptide reads, in one-letter code: Large ribosomal subunit protein bL36 (37 aa).

Belongs to the bacterial ribosomal protein bL36 family.

This is Large ribosomal subunit protein bL36 from Staphylococcus aureus (strain Mu3 / ATCC 700698).